The following is a 270-amino-acid chain: Vegetative storage protein 1 (270 aa).

Positions 1–17 are cleaved as a signal peptide; sequence MKILSLSLLLLLAATVS. 2 N-linked (GlcNAc...) asparagine glycosylation sites follow: asparagine 115 and asparagine 215.

This sequence belongs to the APS1/VSP family. Expressed in leaves and in gynoecia, especially in styles, the basal and distal ends of ovaries and in siliques.

In terms of biological role, may function as somatic storage protein during early seedling development. The chain is Vegetative storage protein 1 (VSP1) from Arabidopsis thaliana (Mouse-ear cress).